The following is a 107-amino-acid chain: Large ribosomal subunit protein uL24 (107 aa).

Belongs to the universal ribosomal protein uL24 family. In terms of assembly, part of the 50S ribosomal subunit.

Functionally, one of two assembly initiator proteins, it binds directly to the 5'-end of the 23S rRNA, where it nucleates assembly of the 50S subunit. Its function is as follows. One of the proteins that surrounds the polypeptide exit tunnel on the outside of the subunit. The sequence is that of Large ribosomal subunit protein uL24 from Kosmotoga olearia (strain ATCC BAA-1733 / DSM 21960 / TBF 19.5.1).